The sequence spans 134 residues: MAATMKKAAAEDVNVTFEDQQKINKFARNTSRITELKEEIEVKKKQLQNLEDACEDIMLADDDCLMIPYQIGDVFISHSQEETQEMLEEAKKNLQEEIDALESRVESIQRVLADLKVQLYAKFGSNINLEADES.

Alanine 2 is modified (N-acetylalanine). A Phosphoserine modification is found at serine 125.

This sequence belongs to the prefoldin subunit beta family. As to quaternary structure, heterohexamer of two PFD-alpha type and four PFD-beta type subunits. Interacts with URI1; the interaction is phosphorylation-dependent and occurs in a growth-dependent manner.

The protein localises to the nucleus. Its subcellular location is the cytoplasm. It is found in the mitochondrion. Binds specifically to cytosolic chaperonin (c-CPN) and transfers target proteins to it. Binds to nascent polypeptide chain and promotes folding in an environment in which there are many competing pathways for nonnative proteins. The polypeptide is Prefoldin subunit 4 (PFDN4) (Bos taurus (Bovine)).